The following is a 711-amino-acid chain: Pentatricopeptide repeat-containing protein At5g46580, chloroplastic (711 aa).

A chloroplast-targeting transit peptide spans 1–43 (MATVLTTAIDVCFNPQNSDTKKHSLFLKPSLFRQSRSRKLNIS). PPR repeat units lie at residues 185–219 (ETIF…GVEL), 220–254 (DNIT…GLMP), 255–289 (DEVT…GWKP), 290–324 (DAIA…DVKP), 325–359 (NVVV…GLTP), 360–394 (NEKT…KWPM), 395–425 (DFIL…MKES), 431–465 (DNFS…GVQV), 466–500 (NVMG…GVKP), and 501–535 (DDRL…NKKL). A Smr domain is found at 614–696 (LDVRSLSVGA…IFVATKEDLV (83 aa)).

The protein belongs to the PPR family. P subfamily.

The protein resides in the plastid. It localises to the chloroplast. In Arabidopsis thaliana (Mouse-ear cress), this protein is Pentatricopeptide repeat-containing protein At5g46580, chloroplastic.